We begin with the raw amino-acid sequence, 105 residues long: Large ribosomal subunit protein uL24 (105 aa).

The protein belongs to the universal ribosomal protein uL24 family. In terms of assembly, part of the 50S ribosomal subunit.

Functionally, one of two assembly initiator proteins, it binds directly to the 5'-end of the 23S rRNA, where it nucleates assembly of the 50S subunit. In terms of biological role, one of the proteins that surrounds the polypeptide exit tunnel on the outside of the subunit. The sequence is that of Large ribosomal subunit protein uL24 from Dictyoglomus thermophilum (strain ATCC 35947 / DSM 3960 / H-6-12).